Reading from the N-terminus, the 280-residue chain is Putative pyruvate, phosphate dikinase regulatory protein (280 aa).

149–156 (GVSRSSKT) serves as a coordination point for ADP.

Belongs to the pyruvate, phosphate/water dikinase regulatory protein family. PDRP subfamily.

The catalysed reaction is N(tele)-phospho-L-histidyl/L-threonyl-[pyruvate, phosphate dikinase] + ADP = N(tele)-phospho-L-histidyl/O-phospho-L-threonyl-[pyruvate, phosphate dikinase] + AMP + H(+). It catalyses the reaction N(tele)-phospho-L-histidyl/O-phospho-L-threonyl-[pyruvate, phosphate dikinase] + phosphate + H(+) = N(tele)-phospho-L-histidyl/L-threonyl-[pyruvate, phosphate dikinase] + diphosphate. Its function is as follows. Bifunctional serine/threonine kinase and phosphorylase involved in the regulation of the pyruvate, phosphate dikinase (PPDK) by catalyzing its phosphorylation/dephosphorylation. The chain is Putative pyruvate, phosphate dikinase regulatory protein from Novosphingobium aromaticivorans (strain ATCC 700278 / DSM 12444 / CCUG 56034 / CIP 105152 / NBRC 16084 / F199).